We begin with the raw amino-acid sequence, 305 residues long: Glyceraldehyde-3-phosphate dehydrogenase 2, cytosolic (305 aa).

NAD(+) is bound by residues D3 and R50. D-glyceraldehyde 3-phosphate contacts are provided by residues 121 to 123 (SCT), T152, 181 to 182 (TG), and R204. C122 (nucleophile) is an active-site residue. Residue N286 participates in NAD(+) binding.

This sequence belongs to the glyceraldehyde-3-phosphate dehydrogenase family. As to quaternary structure, homotetramer.

It localises to the cytoplasm. It catalyses the reaction D-glyceraldehyde 3-phosphate + phosphate + NAD(+) = (2R)-3-phospho-glyceroyl phosphate + NADH + H(+). The protein operates within carbohydrate degradation; glycolysis; pyruvate from D-glyceraldehyde 3-phosphate: step 1/5. Its function is as follows. Key enzyme in glycolysis that catalyzes the first step of the pathway by converting D-glyceraldehyde 3-phosphate (G3P) into 3-phospho-D-glyceroyl phosphate. Essential for the maintenance of cellular ATP levels and carbohydrate metabolism. This chain is Glyceraldehyde-3-phosphate dehydrogenase 2, cytosolic (GAPC), found in Hordeum vulgare (Barley).